A 633-amino-acid polypeptide reads, in one-letter code: MSELNYEELGLKVGLEIHQQLNTPHKLFCNCSTNLEEEYKLTLERYLRPALSELGEVDVAALFEWKKGKKYVYRIPITTSCLVEADEEPPHAINEEALKIALAIAMALNSNIVDEIYVMRKIVIDGSNTTGFQRTAIIALGGMLKDEEVSIQSIAVEEDAARKIDEGTDQVTYSLDRLGIPLIEISTGPDIRSPEQAERVALKIGQLLRMTGKVKRGIGTIRQDLNISIKGGTKIEIKGVQKLELIPDIVRYEAIRQFNLLKIKEELYRRGLTKELVLSNFVVKDVTELFKNTNSKIIKNGIEKGGLVYGIRAYKLKGVLGWELIPKKRRFGTEIADYVRALAGLGGLFHSDELPNYGITEEEINKVREALNATTEDALILIVGERERLDKAVEVIKDRILLAFDGIPKETRGALDDGTTKFLRPQPGSARMYPETDIPPRRIDEKLLEDAKKLVPESPESKMKRYIVLGLSEELAKEIIRDPRLDLFEELVNKYSPRVPPVVIASTITNTLKYVKSKGGDISKINEEDIEELIKSIYESRISKDSISEILVEYTTSKNVELKDIIRKYEVLPIEELEKIIDDIINSNLDEIRKRKDKAVNLIMSKVMSKVKGRADGKIVLELIRSRLKNVIE.

The segment at leucine 415 to aspartate 437 is disordered.

This sequence belongs to the GatB/GatE family. GatE subfamily. As to quaternary structure, heterodimer of GatD and GatE.

It carries out the reaction L-glutamyl-tRNA(Gln) + L-glutamine + ATP + H2O = L-glutaminyl-tRNA(Gln) + L-glutamate + ADP + phosphate + H(+). Functionally, allows the formation of correctly charged Gln-tRNA(Gln) through the transamidation of misacylated Glu-tRNA(Gln) in organisms which lack glutaminyl-tRNA synthetase. The reaction takes place in the presence of glutamine and ATP through an activated gamma-phospho-Glu-tRNA(Gln). The GatDE system is specific for glutamate and does not act on aspartate. In Saccharolobus solfataricus (strain ATCC 35092 / DSM 1617 / JCM 11322 / P2) (Sulfolobus solfataricus), this protein is Glutamyl-tRNA(Gln) amidotransferase subunit E.